The chain runs to 58 residues: Dortoxin (58 aa).

An LCN-type CS-alpha/beta domain is found at V3–V58. Intrachain disulfides connect C18–C41, C27–C46, and C31–C48.

As to expression, expressed by the venom gland.

The protein resides in the secreted. Binds to sodium channels (Nav) and affects the channel activation process. In mice, causes hyperactivity that persists until death. The chain is Dortoxin from Parabuthus transvaalicus (Transvaal thick-tailed scorpion).